The primary structure comprises 309 residues: Ribonuclease Z (309 aa).

Zn(2+) contacts are provided by histidine 63, histidine 65, aspartate 67, histidine 68, histidine 145, aspartate 216, and histidine 274. Aspartate 67 (proton acceptor) is an active-site residue.

It belongs to the RNase Z family. In terms of assembly, homodimer. Zn(2+) serves as cofactor.

It carries out the reaction Endonucleolytic cleavage of RNA, removing extra 3' nucleotides from tRNA precursor, generating 3' termini of tRNAs. A 3'-hydroxy group is left at the tRNA terminus and a 5'-phosphoryl group is left at the trailer molecule.. Its function is as follows. Zinc phosphodiesterase, which displays some tRNA 3'-processing endonuclease activity. Probably involved in tRNA maturation, by removing a 3'-trailer from precursor tRNA. The chain is Ribonuclease Z from Streptococcus pneumoniae serotype 2 (strain D39 / NCTC 7466).